The chain runs to 75 residues: Tautomerase PptA (75 aa).

Catalysis depends on P2, which acts as the Proton acceptor; via imino nitrogen.

The protein belongs to the 4-oxalocrotonate tautomerase family. PptA subfamily. Homodimer.

It localises to the cytoplasm. The protein is Tautomerase PptA of Escherichia coli (strain SMS-3-5 / SECEC).